Consider the following 155-residue polypeptide: MSRRGTAEEKTAKSDPIYRNRLVNMLVNRILKHGKKSLAYQIIYRAVKKIQQKTETNPLSVLRQAIRGVTPDIAVKARRVGGSTHQVPIEIGSTQGKALAIRWLLAASRKRPGRNMAFKLSSELVDAAKGSGDAIRKKEETHRMAEANRAFAHFR.

It belongs to the universal ribosomal protein uS7 family. Part of the 30S ribosomal subunit.

The protein resides in the plastid. It is found in the chloroplast. In terms of biological role, one of the primary rRNA binding proteins, it binds directly to 16S rRNA where it nucleates assembly of the head domain of the 30S subunit. This chain is Small ribosomal subunit protein uS7cz/uS7cy (rps7-A), found in Daucus carota (Wild carrot).